A 378-amino-acid chain; its full sequence is Erythronate-4-phosphate dehydrogenase (378 aa).

Substrate is bound by residues S45 and T66. Residues D146 and T175 each contribute to the NAD(+) site. R208 is an active-site residue. Position 232 (D232) interacts with NAD(+). E237 is a catalytic residue. The Proton donor role is filled by H254. Residue G257 participates in NAD(+) binding. Position 258 (Y258) interacts with substrate.

This sequence belongs to the D-isomer specific 2-hydroxyacid dehydrogenase family. PdxB subfamily. Homodimer.

The protein localises to the cytoplasm. It carries out the reaction 4-phospho-D-erythronate + NAD(+) = (R)-3-hydroxy-2-oxo-4-phosphooxybutanoate + NADH + H(+). The protein operates within cofactor biosynthesis; pyridoxine 5'-phosphate biosynthesis; pyridoxine 5'-phosphate from D-erythrose 4-phosphate: step 2/5. Functionally, catalyzes the oxidation of erythronate-4-phosphate to 3-hydroxy-2-oxo-4-phosphonooxybutanoate. This Salmonella dublin (strain CT_02021853) protein is Erythronate-4-phosphate dehydrogenase.